The chain runs to 573 residues: Developmental and secondary metabolism regulator VEL1 (573 aa).

The region spanning 26–220 (NRHLWYQLTV…ADQGCRVRIR (195 aa)) is the Velvet domain. The Nuclear localization signal motif lies at 40-45 (ERARAC). The segment at 222–520 (DVRMRKRDGK…STGGKRKHDH (299 aa)) is disordered. Basic and acidic residues predominate over residues 230–245 (GKGSGFDRRGEEEYSR). 2 stretches are compositionally biased toward pro residues: residues 291–310 (APPP…PPAA) and 341–351 (APIPPATPTGP). A compositionally biased stretch (low complexity) spans 352-363 (YPTSSAAPSPYA). Positions 379 to 389 (PPAPSASPAPP) are enriched in pro residues. Residues 432 to 448 (TPASQPTYSTPASQPTY) show a composition bias toward polar residues. Residues 458 to 475 (SAPPPAPYSAPAPPPPRP) show a composition bias toward pro residues. The PEST stretch occupies residues 476–504 (SMSQSSLAPLKIASLVSPLPPIEAQTEPL).

Belongs to the velvet family. VeA subfamily. Component of the heterotrimeric velvet complex composed of LAE1, VEL1 and VEL2; VEL1 acting as a bridging protein between LAE1 and VEL2. Interacts with LAE1.

It is found in the nucleus. The protein localises to the cytoplasm. Component of the velvet transcription factor complex that controls sexual/asexual developmental ratio in response to light, promoting sexual development in the darkness while stimulating asexual sporulation under illumination. The velvet complex hat acts as a global regulator for secondary metabolite gene expression. Regulates expression of the carbohydrate-active enzyme gene clusters. In Hypocrea jecorina (strain QM6a) (Trichoderma reesei), this protein is Developmental and secondary metabolism regulator VEL1.